A 546-amino-acid chain; its full sequence is Hexose transporter HXT10 (546 aa).

Over 1–44 (MVSSSVSILGTSAKASTSLSRKDEIKLTPETREASLDIPYKPII) the chain is Cytoplasmic. The helical transmembrane segment at 45 to 65 (AYWTVMGLCLMIAFGGFIFGW) threads the bilayer. The Extracellular segment spans residues 66–100 (DTGTISGFINQTDFKRRFGELQRDGSFQLSDVRTG). An N-linked (GlcNAc...) asparagine glycan is attached at Asn-75. The chain crosses the membrane as a helical span at residues 101 to 121 (LIVGIFNIGCALGGLTLGRLG). The Cytoplasmic segment spans residues 122-127 (DIYGRK). The chain crosses the membrane as a helical span at residues 128–148 (IGLMCVILVYVVGIVIQIASS). Residues 149–158 (DKWYQYFIGR) lie on the Extracellular side of the membrane. The helical transmembrane segment at 159 to 179 (IVSGMGVGGVAVLSPTLISEI) threads the bilayer. Residues 180-185 (SPKHLR) lie on the Cytoplasmic side of the membrane. A helical membrane pass occupies residues 186-206 (GTCVSFYQLMITLGIFLGYCT). The Extracellular segment spans residues 207–220 (NYGTKKYSNSIQWR). A helical membrane pass occupies residues 221–241 (VPLGLCFAWAIFMVIGMVMVP). Over 242–324 (ESPRYLVEKG…IQSLQQLTGC (83 aa)) the chain is Cytoplasmic. Residues 325 to 341 (NYFFYYGTTIFNAVGMQ) traverse the membrane as a helical segment. At 342–347 (DSFETS) the chain is on the extracellular side. Residues 348–365 (IVLGAVNFASTFVALYIV) form a helical membrane-spanning segment. Topologically, residues 366-372 (DKFGRRK) are cytoplasmic. A helical transmembrane segment spans residues 373–393 (CLLWGSASMAICFVIFATVGV). Residues 394-415 (TRLWPQGKDQPSSQSAGNVMIV) are Extracellular-facing. The helical transmembrane segment at 416 to 436 (FTCFFIFSFAITWAPIAYVIV) threads the bilayer. The Cytoplasmic segment spans residues 437–453 (AETYPLRVKNRAMAIAV). The chain crosses the membrane as a helical span at residues 454–474 (GANWMWGFLIGFFTPFITRSI). A topological domain (extracellular) is located at residue Gly-475. Residues 476-496 (FSYGYVFMGCLIFSYFYVFFF) form a helical membrane-spanning segment. The Cytoplasmic portion of the chain corresponds to 497 to 546 (VCETKGLTLEEVNEMYEERIKPWKSGGWIPSSRRTPQPTSSTPLVIVDSK).

This sequence belongs to the major facilitator superfamily. Sugar transporter (TC 2.A.1.1) family.

It is found in the membrane. Its function is as follows. Probable glucose transporter. The chain is Hexose transporter HXT10 (HXT10) from Saccharomyces cerevisiae (strain ATCC 204508 / S288c) (Baker's yeast).